The primary structure comprises 150 residues: Ribonuclease H (150 aa).

Residues 1 to 142 (MSDSVEIFTD…ADQLANRGVD (142 aa)) enclose the RNase H type-1 domain. Residues D10, E48, D70, and D134 each coordinate Mg(2+).

Belongs to the RNase H family. In terms of assembly, monomer. Requires Mg(2+) as cofactor.

Its subcellular location is the cytoplasm. The enzyme catalyses Endonucleolytic cleavage to 5'-phosphomonoester.. Its function is as follows. Endonuclease that specifically degrades the RNA of RNA-DNA hybrids. This Pseudomonas fluorescens (strain ATCC BAA-477 / NRRL B-23932 / Pf-5) protein is Ribonuclease H.